The primary structure comprises 267 residues: 5'-nucleotidase SurE (267 aa).

D14, D15, S45, and N100 together coordinate a divalent metal cation.

Belongs to the SurE nucleotidase family. A divalent metal cation serves as cofactor.

It localises to the cytoplasm. It carries out the reaction a ribonucleoside 5'-phosphate + H2O = a ribonucleoside + phosphate. In terms of biological role, nucleotidase that shows phosphatase activity on nucleoside 5'-monophosphates. This is 5'-nucleotidase SurE from Methanosarcina barkeri (strain Fusaro / DSM 804).